We begin with the raw amino-acid sequence, 392 residues long: Branched-chain-amino-acid aminotransferase, mitochondrial (392 aa).

A mitochondrion-targeting transit peptide spans 1–27; it reads MAAAALGQIWARKFLSVPWLLCGPRRY. Substrate is bound at residue Y168. N6-(pyridoxal phosphate)lysine is present on K229. N6-acetyllysine is present on K321.

The protein belongs to the class-IV pyridoxal-phosphate-dependent aminotransferase family. Homodimer. The cofactor is pyridoxal 5'-phosphate.

Its subcellular location is the mitochondrion. It carries out the reaction L-leucine + 2-oxoglutarate = 4-methyl-2-oxopentanoate + L-glutamate. It catalyses the reaction L-isoleucine + 2-oxoglutarate = (S)-3-methyl-2-oxopentanoate + L-glutamate. The catalysed reaction is L-valine + 2-oxoglutarate = 3-methyl-2-oxobutanoate + L-glutamate. In terms of biological role, catalyzes the first reaction in the catabolism of the essential branched chain amino acids leucine, isoleucine, and valine. May also function as a transporter of branched chain alpha-keto acids. The sequence is that of Branched-chain-amino-acid aminotransferase, mitochondrial (BCAT2) from Pongo abelii (Sumatran orangutan).